We begin with the raw amino-acid sequence, 705 residues long: Probable glutamate carboxypeptidase AMP1 (705 aa).

Over 1-24 the chain is Cytoplasmic; it reads MSQPLTTRPTVTGISIIPFRQPPP. The chain crosses the membrane as a helical; Signal-anchor for type II membrane protein span at residues 25–42; it reads LCSFLFVIVLFVATFYTL. Topologically, residues 43-705 are extracellular; the sequence is HHPDAVTPPL…ASKALKGGFT (663 aa). Residues asparagine 74, asparagine 137, and asparagine 322 are each glycosylated (N-linked (GlcNAc...) asparagine). The tract at residues 255–548 is catalytic; sequence GVVGGEKLSL…GIWGLLGILL (294 aa). Histidine 356 and aspartate 366 together coordinate Zn(2+). Glutamate 403 functions as the Nucleophile in the catalytic mechanism. Glutamate 404, aspartate 432, and histidine 514 together coordinate Zn(2+). The N-linked (GlcNAc...) asparagine glycan is linked to asparagine 676.

This sequence belongs to the peptidase M28 family. M28B subfamily. Zn(2+) serves as cofactor. In terms of tissue distribution, expressed in all plant parts. Highest levels in the bolt stem, inflorescence, root and silique. Low level in leaves.

The protein localises to the endoplasmic reticulum membrane. The enzyme catalyses Release of an unsubstituted, C-terminal glutamyl residue, typically from Ac-Asp-Glu or folylpoly-gamma-glutamates.. May modulate the level of one or more small signaling molecules that have a role in regulating meristem function. May play a role in balancing and restricting the meristem-promoting activity of auxin signaling. Involved in ethylene and giberellin (GA) signaling pathways or in a parallel pathway controlling cell and hypocotyl elongation and cellular organization. Involved in abscisic acid (ABA) signaling pathway. Plays a negative role in ABA-mediated seed germination and seedling development. Acts in association with LAMP1 to suppress ectopic stem cell niche formation in the shoot apical meristem (SAM) independently of cytokinin signaling pathway. Modulates responses to ABA, oxidative stress and abotic stress. Acts as a negative regulator of the ABA signaling pathway to modulate freezing and drought stress responses. Mediates carbon and amino acid metabolism. May be involved in the acquisition and/or maintenance of seed dormancy. Involved in the regulation of response to heat shock and plant defense. This is Probable glutamate carboxypeptidase AMP1 from Arabidopsis thaliana (Mouse-ear cress).